We begin with the raw amino-acid sequence, 266 residues long: Transmembrane domain-containing protein TMIGD3 (266 aa).

Residues 1–20 are disordered; sequence MEGSPAGPIEQKEARWESSW. The chain crosses the membrane as a helical span at residues 55–75; that stretch reads FLPVMWLFILLSLALISDAMV. The N-linked (GlcNAc...) asparagine glycan is linked to asparagine 192. A helical membrane pass occupies residues 213-233; the sequence is ILIICILITGLGIISVISHLT.

In terms of tissue distribution, expressed in the lung and bone. Expressed at lower levels in osteosarcoma tissues (at protein level).

It is found in the membrane. Functionally, plays a suppressive role in osteosarcoma malignancy by inhibiting NF-kappa-B activity. In Homo sapiens (Human), this protein is Transmembrane domain-containing protein TMIGD3.